The primary structure comprises 221 residues: Oligoribonuclease (221 aa).

Residues 21-186 (LVWVDLEMTG…ADIVESIREL (166 aa)) form the Exonuclease domain. The active site involves tyrosine 143.

This sequence belongs to the oligoribonuclease family.

It localises to the cytoplasm. Functionally, 3'-to-5' exoribonuclease specific for small oligoribonucleotides. The polypeptide is Oligoribonuclease (Corynebacterium efficiens (strain DSM 44549 / YS-314 / AJ 12310 / JCM 11189 / NBRC 100395)).